Consider the following 285-residue polypeptide: Complex I assembly factor TIMMDC1, mitochondrial (285 aa).

The next 4 membrane-spanning stretches (helical) occupy residues 80-100, 137-159, 165-185, and 188-208; these read AAVSAGIIGWAYGGIPAFIYA, RWSWRTAVFVTIFNTVNTGLTVY, MSHFAIAGAVTGGLFRINLGV, and LVAGSIIGALLGAPMGSLLMA. Positions 265-285 are disordered; sequence RIEELLSLPRNPSSPHQQSKH. Residues 274 to 285 show a composition bias toward polar residues; it reads RNPSSPHQQSKH. At Ser277 the chain carries Phosphoserine.

It belongs to the Tim17/Tim22/Tim23 family. In terms of assembly, associates with the intermediate 315 kDa subcomplex of incompletely assembled complex I. Interacts with TMEM70.

The protein resides in the mitochondrion membrane. In terms of biological role, chaperone protein involved in the assembly of the mitochondrial NADH:ubiquinone oxidoreductase complex (complex I). Participates in constructing the membrane arm of complex I. This Mus musculus (Mouse) protein is Complex I assembly factor TIMMDC1, mitochondrial.